We begin with the raw amino-acid sequence, 463 residues long: Glycine--tRNA ligase (463 aa).

2 residues coordinate substrate: Arg100 and Glu175. ATP-binding positions include 207-209 (RNE), 217-222 (FRTREF), 291-292 (EL), and 335-338 (GADR). 222–226 (FEQME) lines the substrate pocket. Substrate is bound at residue 331-335 (EPSLG).

Belongs to the class-II aminoacyl-tRNA synthetase family. As to quaternary structure, homodimer.

It is found in the cytoplasm. It carries out the reaction tRNA(Gly) + glycine + ATP = glycyl-tRNA(Gly) + AMP + diphosphate. Functionally, catalyzes the attachment of glycine to tRNA(Gly). This Clostridium beijerinckii (strain ATCC 51743 / NCIMB 8052) (Clostridium acetobutylicum) protein is Glycine--tRNA ligase.